Reading from the N-terminus, the 667-residue chain is Cyclin-dependent kinase 17 (667 aa).

2 disordered regions span residues Met-1–Asn-70 and Asp-85–Met-184. Acidic residues-rich tracts occupy residues Glu-99–Asp-111 and Asp-119–Glu-144. The segment covering Thr-151–Thr-164 has biased composition (polar residues). The Protein kinase domain maps to Tyr-328–Leu-609. Residues Leu-334–Val-342 and Lys-357 each bind ATP. Residue Asp-449 is the Proton acceptor of the active site. 2 residues coordinate Mg(2+): Asn-454 and Asp-467. The disordered stretch occupies residues His-642 to Thr-667. Residues His-644 to Thr-653 show a composition bias toward basic residues.

This sequence belongs to the protein kinase superfamily. CMGC Ser/Thr protein kinase family. CDC2/CDKX subfamily. In terms of assembly, interacts with cyy-1; the interaction is required to activate pct-1. Requires Mg(2+) as cofactor.

It localises to the cytoplasm. The protein resides in the cell projection. It is found in the dendrite. Its subcellular location is the axon. The catalysed reaction is L-seryl-[protein] + ATP = O-phospho-L-seryl-[protein] + ADP + H(+). It catalyses the reaction L-threonyl-[protein] + ATP = O-phospho-L-threonyl-[protein] + ADP + H(+). Serine/threonine-protein kinase, which, in association with cyy-1, regulates the trafficking of synaptic vesicles in the DA9 motor neuron and probably also in the DD motor neurons and in RIA interneurons. Its function is as follows. Sufficient for synaptic vesicle trafficking in the DA9 motor neuron. The protein is Cyclin-dependent kinase 17 of Caenorhabditis elegans.